The sequence spans 284 residues: Deoxyribonuclease-1 (284 aa).

Positions 1 to 22 (MRYTGLMGTLLTLVNLLQLAGT) are cleaved as a signal peptide. Asn40 carries N-linked (GlcNAc...) asparagine glycosylation. The active site involves Glu100. The cysteines at positions 123 and 126 are disulfide-linked. N-linked (GlcNAc...) asparagine glycosylation occurs at Asn128. The active site involves His156. Cys195 and Cys231 are oxidised to a cystine.

It belongs to the DNase I family. It depends on Ca(2+) as a cofactor. Mg(2+) serves as cofactor. In terms of processing, N-glycosylated. As to expression, highly expressed in the parotid and submandibular gland as well as in the kidney and duodenum (at protein level). Expressed at intermediate level in the ileum, mesenterial lymph nodes, liver, ventral prostate, epididymis, ovary and stomach (at protein level). Expressed at low level in the sublingual, preputial, coagulation and pituitary gland (at protein level). Also present in the lachrymal and thyroid glands, striated muscle, intestine, the urinary bladder and the eye.

Its subcellular location is the secreted. The protein resides in the zymogen granule. It localises to the nucleus envelope. The enzyme catalyses Endonucleolytic cleavage to 5'-phosphodinucleotide and 5'-phosphooligonucleotide end-products.. In terms of biological role, serum endocuclease secreted into body fluids by a wide variety of exocrine and endocrine organs. Expressed by non-hematopoietic tissues and preferentially cleaves protein-free DNA. Among other functions, seems to be involved in cell death by apoptosis. Binds specifically to G-actin and blocks actin polymerization. Together with DNASE1L3, plays a key role in degrading neutrophil extracellular traps (NETs). NETs are mainly composed of DNA fibers and are released by neutrophils to bind pathogens during inflammation. Degradation of intravascular NETs by DNASE1 and DNASE1L3 is required to prevent formation of clots that obstruct blood vessels and cause organ damage following inflammation. The sequence is that of Deoxyribonuclease-1 from Mus musculus (Mouse).